Here is a 357-residue protein sequence, read N- to C-terminus: Probable dual-specificity RNA methyltransferase RlmN (357 aa).

Residue Glu92 is the Proton acceptor of the active site. A Radical SAM core domain is found at 98-336; that stretch reads HKYGLSVCVT…CGVRLEHGTD (239 aa). Residues Cys105 and Cys341 are joined by a disulfide bond. [4Fe-4S] cluster-binding residues include Cys112, Cys116, and Cys119. S-adenosyl-L-methionine is bound by residues 164–165, Ser196, 219–221, and Asn297; these read GE and SLH. Cys341 serves as the catalytic S-methylcysteine intermediate.

It belongs to the radical SAM superfamily. RlmN family. [4Fe-4S] cluster is required as a cofactor.

The protein resides in the cytoplasm. The catalysed reaction is adenosine(2503) in 23S rRNA + 2 reduced [2Fe-2S]-[ferredoxin] + 2 S-adenosyl-L-methionine = 2-methyladenosine(2503) in 23S rRNA + 5'-deoxyadenosine + L-methionine + 2 oxidized [2Fe-2S]-[ferredoxin] + S-adenosyl-L-homocysteine. It catalyses the reaction adenosine(37) in tRNA + 2 reduced [2Fe-2S]-[ferredoxin] + 2 S-adenosyl-L-methionine = 2-methyladenosine(37) in tRNA + 5'-deoxyadenosine + L-methionine + 2 oxidized [2Fe-2S]-[ferredoxin] + S-adenosyl-L-homocysteine. Specifically methylates position 2 of adenine 2503 in 23S rRNA and position 2 of adenine 37 in tRNAs. In Exiguobacterium sibiricum (strain DSM 17290 / CCUG 55495 / CIP 109462 / JCM 13490 / 255-15), this protein is Probable dual-specificity RNA methyltransferase RlmN.